The sequence spans 193 residues: Cerebellin-1 (193 aa).

Residues 1-21 (MLGVVELLLLGAAWLAGPARG) form the signal peptide. Residue Asn23 is glycosylated (N-linked (GlcNAc...) asparagine). The segment at 34–38 (CLVVC) is essential for interaction with NRXN1 and linker of two C1q trimers into disulfide-linked hexamers. The region spanning 57 to 193 (SGSAKVAFSA…TFSGFLVFPL (137 aa)) is the C1q domain. The tract at residues 62 to 193 (VAFSAIRSTN…TFSGFLVFPL (132 aa)) is necessary for interaction with CBLN3, and homotrimerization. A glycan (N-linked (GlcNAc...) asparagine) is linked at Asn79. The tract at residues 122 to 147 (YNRQTIQVSLMLNGWPVISAFAGDQD) is essential for interaction with GRID2.

In terms of assembly, homohexamer; disulfide-linked homotrimers. The trimers are assembled via the globular C1q domains. The trimers associate via N-terminal cysteine residues to form disulfide-linked hexamers. May form oligomers with CBLN2, CBLN3 and CBLN4 prior to secretion. Once secreted, does not interact with other CBLN family members. Interacts with GRID1. Interacts with NRXN1 and NRXN2 long (alpha) and short (beta) isoforms produced by alternative promoter usage. Competes with NLGN1 for NRXN1-binding. Weakly interacts with NRXN3 short isoform and not at all with NRXN3 long isoform. Interacts (via C1q domain) with GRID2; GRID2-binding is calcium-independent; CBLN1 hexamers anchor GRID2 N-terminal domain dimers to monomeric NRXN1 isoform beta; promotes synaptogenesis and mediates the D-Serine-dependent long term depression signals and AMPA receptor endocytosis. The proteolytic processing to yield cerebellin seems to occur either prior to the secretion by presynaptic neurons and subsequent oligomerization or in some other location after release of the mature protein. Post-translationally, sialoglycoprotein.

It localises to the secreted. The protein localises to the postsynaptic cell membrane. Its function is as follows. Required for synapse integrity and synaptic plasticity. During cerebellar synapse formation, essential for the matching and maintenance of pre- and post-synaptic elements at parallel fiber-Purkinje cell synapses, the establishment of the proper pattern of climbing fiber-Purkinje cell innervation, and induction of long-term depression at parallel fiber-Purkinje cell synapses. Plays a role as a synaptic organizer that acts bidirectionally on both pre- and post-synaptic components. On the one hand induces accumulation of synaptic vesicles in the pre-synaptic part by binding with NRXN1 and in other hand induces clustering of GRID2 and its associated proteins at the post-synaptic site through association of GRID2. NRXN1-CBLN1-GRID2 complex directly induces parallel fiber protrusions that encapsulate spines of Purkinje cells leading to accumulation of GRID2 and synaptic vesicles. Required for CBLN3 export from the endoplasmic reticulum and secretion. NRXN1-CBLN1-GRID2 complex mediates the D-Serine-dependent long term depression signals and AMPA receptor endocytosis. Essential for long-term maintenance but not establishment of excitatory synapses. Inhibits the formation and function of inhibitory GABAergic synapses in cerebellar Purkinje cells. Functionally, the cerebellin peptide exerts neuromodulatory functions. Directly stimulates norepinephrine release via the adenylate cyclase/PKA-dependent signaling pathway; and indirectly enhances adrenocortical secretion in vivo, through a paracrine mechanism involving medullary catecholamine release. The polypeptide is Cerebellin-1 (Bos taurus (Bovine)).